The sequence spans 544 residues: Chaperonin GroEL (544 aa).

ATP-binding positions include 30-33 (TLGP), Lys51, 87-91 (DGTTT), Gly415, and Asp495.

Belongs to the chaperonin (HSP60) family. Forms a cylinder of 14 subunits composed of two heptameric rings stacked back-to-back. Interacts with the co-chaperonin GroES.

The protein resides in the cytoplasm. It carries out the reaction ATP + H2O + a folded polypeptide = ADP + phosphate + an unfolded polypeptide.. Functionally, together with its co-chaperonin GroES, plays an essential role in assisting protein folding. The GroEL-GroES system forms a nano-cage that allows encapsulation of the non-native substrate proteins and provides a physical environment optimized to promote and accelerate protein folding. In Neisseria meningitidis serogroup A / serotype 4A (strain DSM 15465 / Z2491), this protein is Chaperonin GroEL.